The chain runs to 372 residues: NAD(P)H-quinone oxidoreductase subunit 1 (372 aa).

The next 8 helical transmembrane spans lie at 29–49 (WLPFPMLLMIVVATVGVLVTV), 97–117 (LLFTLGPVIVAVPVFLSYLVV), 128–148 (LGVAIFLWIALSSIQPIGLLM), 176–196 (LALAVLAVAMMSNSLSTIDIV), 204–224 (ILGWNIWRQPLGFIIFWIAVL), 254–274 (FALYYLASYVNLVLSSLLVAV), 308–328 (TLGIIMTLLKTYLLVFIAVLL), and 351–371 (VALVNLLLTAALKLTFPFAFG).

It belongs to the complex I subunit 1 family. NDH-1 is composed of at least 11 different subunits.

It localises to the cellular thylakoid membrane. The enzyme catalyses a plastoquinone + NADH + (n+1) H(+)(in) = a plastoquinol + NAD(+) + n H(+)(out). It catalyses the reaction a plastoquinone + NADPH + (n+1) H(+)(in) = a plastoquinol + NADP(+) + n H(+)(out). NDH-1 shuttles electrons from an unknown electron donor, via FMN and iron-sulfur (Fe-S) centers, to quinones in the respiratory and/or the photosynthetic chain. The immediate electron acceptor for the enzyme in this species is believed to be plastoquinone. Couples the redox reaction to proton translocation, and thus conserves the redox energy in a proton gradient. The protein is NAD(P)H-quinone oxidoreductase subunit 1 of Trichodesmium erythraeum (strain IMS101).